The chain runs to 405 residues: Arginine biosynthesis bifunctional protein ArgJ (405 aa).

Thr152, Lys178, Thr189, Glu276, Asn400, and Thr405 together coordinate substrate. Thr189 (nucleophile) is an active-site residue.

Belongs to the ArgJ family. Heterotetramer of two alpha and two beta chains.

The protein resides in the cytoplasm. The enzyme catalyses N(2)-acetyl-L-ornithine + L-glutamate = N-acetyl-L-glutamate + L-ornithine. It catalyses the reaction L-glutamate + acetyl-CoA = N-acetyl-L-glutamate + CoA + H(+). The protein operates within amino-acid biosynthesis; L-arginine biosynthesis; L-ornithine and N-acetyl-L-glutamate from L-glutamate and N(2)-acetyl-L-ornithine (cyclic): step 1/1. Its pathway is amino-acid biosynthesis; L-arginine biosynthesis; N(2)-acetyl-L-ornithine from L-glutamate: step 1/4. Its function is as follows. Catalyzes two activities which are involved in the cyclic version of arginine biosynthesis: the synthesis of N-acetylglutamate from glutamate and acetyl-CoA as the acetyl donor, and of ornithine by transacetylation between N(2)-acetylornithine and glutamate. The sequence is that of Arginine biosynthesis bifunctional protein ArgJ from Pseudomonas syringae pv. tomato (strain ATCC BAA-871 / DC3000).